Reading from the N-terminus, the 283-residue chain is BTB/POZ domain-containing protein KCTD15 (283 aa).

Residues 1–33 (MPHRKERPSGSSLNAHGSSGTAEGGNMSRLSLT) are disordered. Residues 9–21 (SGSSLNAHGSSGT) show a composition bias toward polar residues. Residues Ser31, Ser35, and Ser38 each carry the phosphoserine modification. Positions 56–126 (APVHIDVGGH…LRTSKLLLPD (71 aa)) constitute a BTB domain.

Forms oligomers, predominantly homopentamers. Interacts with KCTD1, probably forming heteropentamers depending on its abundance in a cell-type dependent manner. Interacts with TFAP2A; this interaction inhibits TFAP2A transcriptional activation. In terms of tissue distribution, expressed in the cerebral cortex, cerebellum, and hypothalamus (at protein level). Expressed in the arcuate hypothalamic nucleus, the ventromedial hypothalamic nucleus and the accumbens nucleus of the ventral striatum.

The protein localises to the nucleus. Its function is as follows. During embryonic development, interferes with neural crest formation. Inhibits AP2 transcriptional activity by interaction with its activation domain. The chain is BTB/POZ domain-containing protein KCTD15 (Kctd15) from Mus musculus (Mouse).